The sequence spans 389 residues: GDSL esterase/lipase At1g28570 (389 aa).

An N-terminal signal peptide occupies residues 1 to 25 (MATLFMKLVSFFLILSTFCLTTVNS). Ser41 functions as the Nucleophile in the catalytic mechanism. N-linked (GlcNAc...) asparagine glycosylation is found at Asn137 and Asn319. Catalysis depends on residues Asp344 and His347.

It belongs to the 'GDSL' lipolytic enzyme family.

The protein resides in the secreted. The sequence is that of GDSL esterase/lipase At1g28570 from Arabidopsis thaliana (Mouse-ear cress).